Reading from the N-terminus, the 369-residue chain is RNA pseudouridine synthase 5 (369 aa).

One can recognise an S4 RNA-binding domain in the interval alanine 47–aspartate 104.

The protein belongs to the pseudouridine synthase RluA family.

The catalysed reaction is a uridine in RNA = a pseudouridine in RNA. The sequence is that of RNA pseudouridine synthase 5 from Arabidopsis thaliana (Mouse-ear cress).